The primary structure comprises 301 residues: 5'-3' exonuclease (301 aa).

A 5'-3' exonuclease domain is found at 182–264 (GYADLALLRG…RVAADVPLPD (83 aa)).

Functionally, 5'-3' exonuclease acting preferentially on double-stranded DNA. The polypeptide is 5'-3' exonuclease (Streptomyces coelicolor (strain ATCC BAA-471 / A3(2) / M145)).